The primary structure comprises 156 residues: 6,7-dimethyl-8-ribityllumazine synthase (156 aa).

5-amino-6-(D-ribitylamino)uracil is bound by residues F24, 56–58 (SFE), and 80–82 (AVV). 85–86 (ET) contributes to the (2S)-2-hydroxy-3-oxobutyl phosphate binding site. H88 serves as the catalytic Proton donor. F113 provides a ligand contact to 5-amino-6-(D-ribitylamino)uracil. A (2S)-2-hydroxy-3-oxobutyl phosphate-binding site is contributed by R127.

It belongs to the DMRL synthase family.

It catalyses the reaction (2S)-2-hydroxy-3-oxobutyl phosphate + 5-amino-6-(D-ribitylamino)uracil = 6,7-dimethyl-8-(1-D-ribityl)lumazine + phosphate + 2 H2O + H(+). It functions in the pathway cofactor biosynthesis; riboflavin biosynthesis; riboflavin from 2-hydroxy-3-oxobutyl phosphate and 5-amino-6-(D-ribitylamino)uracil: step 1/2. Its function is as follows. Catalyzes the formation of 6,7-dimethyl-8-ribityllumazine by condensation of 5-amino-6-(D-ribitylamino)uracil with 3,4-dihydroxy-2-butanone 4-phosphate. This is the penultimate step in the biosynthesis of riboflavin. This is 6,7-dimethyl-8-ribityllumazine synthase from Thermococcus kodakarensis (strain ATCC BAA-918 / JCM 12380 / KOD1) (Pyrococcus kodakaraensis (strain KOD1)).